A 189-amino-acid polypeptide reads, in one-letter code: Auxin-responsive protein IAA6 (189 aa).

The EAR-like (transcriptional repression) signature appears at 13-17 (LRLGL). In terms of domain architecture, PB1 spans 93–178 (IGYVKVSMDG…SCKRLRIVKR (86 aa)).

This sequence belongs to the Aux/IAA family. As to quaternary structure, homodimers and heterodimers. Interacts with TPL. In terms of tissue distribution, highly expressed in stems and flowers.

Its subcellular location is the nucleus. In terms of biological role, aux/IAA proteins are short-lived transcriptional factors that function as repressors of early auxin response genes at low auxin concentrations. Repression is thought to result from the interaction with auxin response factors (ARFs), proteins that bind to the auxin-responsive promoter element (AuxRE). Formation of heterodimers with ARF proteins may alter their ability to modulate early auxin response genes expression. This is Auxin-responsive protein IAA6 (IAA6) from Arabidopsis thaliana (Mouse-ear cress).